A 216-amino-acid chain; its full sequence is Uracil phosphoribosyltransferase (216 aa).

Residues Arg85, Arg110, and Asp136–Ser144 contribute to the 5-phospho-alpha-D-ribose 1-diphosphate site. Uracil contacts are provided by residues Ile201 and Gly206 to Ala208. Asp207 serves as a coordination point for 5-phospho-alpha-D-ribose 1-diphosphate.

This sequence belongs to the UPRTase family. The cofactor is Mg(2+).

The enzyme catalyses UMP + diphosphate = 5-phospho-alpha-D-ribose 1-diphosphate + uracil. It participates in pyrimidine metabolism; UMP biosynthesis via salvage pathway; UMP from uracil: step 1/1. Its activity is regulated as follows. Allosterically activated by GTP. Functionally, catalyzes the conversion of uracil and 5-phospho-alpha-D-ribose 1-diphosphate (PRPP) to UMP and diphosphate. This Rhodospirillum centenum (strain ATCC 51521 / SW) protein is Uracil phosphoribosyltransferase.